A 139-amino-acid chain; its full sequence is Putative pre-16S rRNA nuclease (139 aa).

This sequence belongs to the YqgF nuclease family.

The protein resides in the cytoplasm. Its function is as follows. Could be a nuclease involved in processing of the 5'-end of pre-16S rRNA. The polypeptide is Putative pre-16S rRNA nuclease (Dictyoglomus thermophilum (strain ATCC 35947 / DSM 3960 / H-6-12)).